We begin with the raw amino-acid sequence, 21 residues long: Trypsin (21 aa).

Belongs to the peptidase S1 family.

It is found in the secreted. The protein localises to the extracellular space. It carries out the reaction Preferential cleavage: Arg-|-Xaa, Lys-|-Xaa.. The polypeptide is Trypsin (Apis mellifera scutellata (Africanized honey bee)).